The primary structure comprises 369 residues: Putative 2-aminoethylphosphonate import ATP-binding protein PhnT (369 aa).

Positions 19–250 (IVLDSLRVAY…PPNRFAAEFL (232 aa)) constitute an ABC transporter domain. 51–58 (GPSGSGKT) contacts ATP.

The protein belongs to the ABC transporter superfamily. 2-aminoethylphosphonate importer (TC 3.A.1.11.5) family.

The protein localises to the cell inner membrane. In terms of biological role, probably part of the PhnSTUV complex (TC 3.A.1.11.5) involved in 2-aminoethylphosphonate import. Probably responsible for energy coupling to the transport system. The chain is Putative 2-aminoethylphosphonate import ATP-binding protein PhnT (phnT) from Salmonella typhi.